The primary structure comprises 351 residues: tRNA-specific 2-thiouridylase MnmA (351 aa).

ATP is bound by residues 7–14 and leucine 33; that span reads GLSGGVDS. The active-site Nucleophile is cysteine 94. A disulfide bridge connects residues cysteine 94 and cysteine 193. An ATP-binding site is contributed by glycine 119. An interaction with tRNA region spans residues 143 to 145; the sequence is KDQ. Residue cysteine 193 is the Cysteine persulfide intermediate of the active site. An interaction with tRNA region spans residues 298-299; sequence RY.

This sequence belongs to the MnmA/TRMU family.

The protein resides in the cytoplasm. The catalysed reaction is S-sulfanyl-L-cysteinyl-[protein] + uridine(34) in tRNA + AH2 + ATP = 2-thiouridine(34) in tRNA + L-cysteinyl-[protein] + A + AMP + diphosphate + H(+). In terms of biological role, catalyzes the 2-thiolation of uridine at the wobble position (U34) of tRNA, leading to the formation of s(2)U34. This is tRNA-specific 2-thiouridylase MnmA from Nostoc punctiforme (strain ATCC 29133 / PCC 73102).